Here is a 576-residue protein sequence, read N- to C-terminus: Proline--tRNA ligase (576 aa).

Belongs to the class-II aminoacyl-tRNA synthetase family. ProS type 1 subfamily. Homodimer.

It is found in the cytoplasm. It carries out the reaction tRNA(Pro) + L-proline + ATP = L-prolyl-tRNA(Pro) + AMP + diphosphate. Its function is as follows. Catalyzes the attachment of proline to tRNA(Pro) in a two-step reaction: proline is first activated by ATP to form Pro-AMP and then transferred to the acceptor end of tRNA(Pro). As ProRS can inadvertently accommodate and process non-cognate amino acids such as alanine and cysteine, to avoid such errors it has two additional distinct editing activities against alanine. One activity is designated as 'pretransfer' editing and involves the tRNA(Pro)-independent hydrolysis of activated Ala-AMP. The other activity is designated 'posttransfer' editing and involves deacylation of mischarged Ala-tRNA(Pro). The misacylated Cys-tRNA(Pro) is not edited by ProRS. The sequence is that of Proline--tRNA ligase from Psychrobacter sp. (strain PRwf-1).